A 262-amino-acid polypeptide reads, in one-letter code: Translation initiation factor 2 subunit alpha (262 aa).

Positions 15–86 (GELVVGTVHK…RKGHVDVSMK (72 aa)) constitute an S1 motif domain.

The protein belongs to the eIF-2-alpha family. As to quaternary structure, heterotrimer composed of an alpha, a beta and a gamma chain.

Functionally, eIF-2 functions in the early steps of protein synthesis by forming a ternary complex with GTP and initiator tRNA. This chain is Translation initiation factor 2 subunit alpha (eif2a), found in Methanothermobacter thermautotrophicus (strain ATCC 29096 / DSM 1053 / JCM 10044 / NBRC 100330 / Delta H) (Methanobacterium thermoautotrophicum).